Consider the following 735-residue polypeptide: E3 UFM1-protein ligase 1 homolog (735 aa).

A disordered region spans residues 389-445; that stretch reads RLEAEKKKQGGAKAAVKVQEETDDWGDGKKGGKGGKKNAKSVKGGSKSSAPSTSSNL. A compositionally biased stretch (basic residues) spans 419 to 428; that stretch reads GGKGGKKNAK. Residues 429 to 445 show a composition bias toward low complexity; sequence SVKGGSKSSAPSTSSNL.

This sequence belongs to the UFL1 family.

Its function is as follows. E3 UFM1-protein ligase that mediates ufmylation of target proteins. In Caenorhabditis elegans, this protein is E3 UFM1-protein ligase 1 homolog (ufl-1).